Consider the following 489-residue polypeptide: N-succinylglutamate 5-semialdehyde dehydrogenase (489 aa).

216–221 (GSAATG) is an NAD(+) binding site. Residues glutamate 239 and cysteine 273 contribute to the active site.

Belongs to the aldehyde dehydrogenase family. AstD subfamily.

It carries out the reaction N-succinyl-L-glutamate 5-semialdehyde + NAD(+) + H2O = N-succinyl-L-glutamate + NADH + 2 H(+). It participates in amino-acid degradation; L-arginine degradation via AST pathway; L-glutamate and succinate from L-arginine: step 4/5. Catalyzes the NAD-dependent reduction of succinylglutamate semialdehyde into succinylglutamate. The protein is N-succinylglutamate 5-semialdehyde dehydrogenase of Erwinia tasmaniensis (strain DSM 17950 / CFBP 7177 / CIP 109463 / NCPPB 4357 / Et1/99).